The sequence spans 352 residues: Glycerol-1-phosphate dehydrogenase [NAD(P)+] (352 aa).

NAD(+) contacts are provided by residues 98–102 (GKPID) and 120–123 (TAAS). Residue Asp-125 coordinates substrate. An NAD(+)-binding site is contributed by Ser-129. Asp-172 provides a ligand contact to substrate. Zn(2+) is bound by residues Asp-172 and His-252. His-256 serves as a coordination point for substrate. His-268 contributes to the Zn(2+) binding site.

This sequence belongs to the glycerol-1-phosphate dehydrogenase family. Zn(2+) serves as cofactor.

Its subcellular location is the cytoplasm. The enzyme catalyses sn-glycerol 1-phosphate + NAD(+) = dihydroxyacetone phosphate + NADH + H(+). It carries out the reaction sn-glycerol 1-phosphate + NADP(+) = dihydroxyacetone phosphate + NADPH + H(+). The protein operates within membrane lipid metabolism; glycerophospholipid metabolism. Functionally, catalyzes the NAD(P)H-dependent reduction of dihydroxyacetonephosphate (DHAP or glycerone phosphate) to glycerol 1-phosphate (G1P). The G1P thus generated is used as the glycerophosphate backbone of phospholipids in the cellular membranes of Archaea. The protein is Glycerol-1-phosphate dehydrogenase [NAD(P)+] of Natronomonas pharaonis (strain ATCC 35678 / DSM 2160 / CIP 103997 / JCM 8858 / NBRC 14720 / NCIMB 2260 / Gabara) (Halobacterium pharaonis).